A 948-amino-acid polypeptide reads, in one-letter code: MSEYKDTLNLPETGFPMRGDLAKREPEMLKRWYQEDLYGEIRKAKKGKKSFVLHDGPPYANGDIHIGHALNKILKDIIIKSKTLSGFDAPYVPGWDCHGLPIELMVEKKVGKPGQKVTAAEFREKCREYAAGQVEGQKESFKRLGIMGEWDKPYRTMDFTTEANIIRALGQIADNGHLLKGFKPVHWCTDCGSALAEAEVEYKNKVSPSIDVRFKAADEAALLAKFSLNEGHQGQGDVSIVIWTTTPWTLPANRAVCLRDDLEYVLIQVEGDNPERIIVAAELAKDVMDRAGIEHFHNLGFAKGADLELTQFQHPFYDFTVPAILGDHVTTDSGTGVVHTAPGHGQEDFAVGQKYNLEVANPVGSNGVYLPDTELFAGQHVFKANDAVVETLKEKGALLHHHAYEHSYPHCWRHKTPIIFRATPQWFVSMDQAGLRAKALESIKGVQWMPEWGQSRIEGMIEGRPEWCISRQRTWGVPIALFVHKETAELHPNTSELIEKVAQVVEQKGIQAWWDIDAAELLGDDAAQYEKVLDTLDVWFDSGVTHYAVVDKREEFNGAEADMYLEGSDQHRGWFQSSLISSIAMKGKAPYKQVLTHGFVVDGHGRKMSKSIGNVVAPKDVTNKLGADILRLWVASTDYTGEVAVSDEILKRSADAYRRIRNTARFFLANLNGFNPETDIVPVEEMVALDRWAVGRALAAQNEIVKAYDEYNTHAVTQRLMHFCSIEMGSFYLDVIKDRQYTAKLGGHAQRSCQTALYYIVEALVRWMAPIMSFTADEIWNQMPASLPSGESRDKFVFTGEWFDGLFGLAEGEELNNAFWSEMQKVRGAVNKLLEAARSDKTIGGSLQAELTLFADDALAAKINKLEDELRFVLLTSAATVKPLSEKSDAAQATDIEGLFVAVRATEAEKCDRCWHHTPDVGTIEGHEKICGRCVSNVDGEGEARKFA.

A 'HIGH' region motif is present at residues 58–68 (PYANGDIHIGH). Glu566 is a binding site for L-isoleucyl-5'-AMP. The 'KMSKS' region motif lies at 607 to 611 (KMSKS). Position 610 (Lys610) interacts with ATP. 4 residues coordinate Zn(2+): Cys911, Cys914, Cys931, and Cys934.

This sequence belongs to the class-I aminoacyl-tRNA synthetase family. IleS type 1 subfamily. Monomer. Zn(2+) serves as cofactor.

The protein resides in the cytoplasm. It carries out the reaction tRNA(Ile) + L-isoleucine + ATP = L-isoleucyl-tRNA(Ile) + AMP + diphosphate. Its function is as follows. Catalyzes the attachment of isoleucine to tRNA(Ile). As IleRS can inadvertently accommodate and process structurally similar amino acids such as valine, to avoid such errors it has two additional distinct tRNA(Ile)-dependent editing activities. One activity is designated as 'pretransfer' editing and involves the hydrolysis of activated Val-AMP. The other activity is designated 'posttransfer' editing and involves deacylation of mischarged Val-tRNA(Ile). The chain is Isoleucine--tRNA ligase from Vibrio vulnificus (strain CMCP6).